We begin with the raw amino-acid sequence, 203 residues long: Peptide deformylase (203 aa).

Cysteine 121 and histidine 163 together coordinate Fe cation. Glutamate 164 is a catalytic residue. Histidine 167 provides a ligand contact to Fe cation.

The protein belongs to the polypeptide deformylase family. Requires Fe(2+) as cofactor.

The catalysed reaction is N-terminal N-formyl-L-methionyl-[peptide] + H2O = N-terminal L-methionyl-[peptide] + formate. In terms of biological role, removes the formyl group from the N-terminal Met of newly synthesized proteins. Requires at least a dipeptide for an efficient rate of reaction. N-terminal L-methionine is a prerequisite for activity but the enzyme has broad specificity at other positions. In Prochlorococcus marinus (strain SARG / CCMP1375 / SS120), this protein is Peptide deformylase.